The primary structure comprises 164 residues: DNA-binding protein inhibitor ID-1 (164 aa).

Residues 46–98 (LPALLDEQQVNVLLYDMNGCYSRLKELVPTLPQNRKVSKVEILQHVIDYIRDL) form the bHLH domain. Residues 91-104 (VIDYIRDLQLELNS) carry the Nuclear export signal motif.

In terms of assembly, heterodimer with other HLH proteins. Interacts with COPS5, IFI204, GATA4, NKX2-5, CLOCK and BMAL1. Isoform Short can form homodimers. In terms of processing, phosphorylated in vitro by PKA and PKC.

The protein localises to the cytoplasm. The protein resides in the nucleus. Functionally, transcriptional regulator (lacking a basic DNA binding domain) which negatively regulates the basic helix-loop-helix (bHLH) transcription factors by forming heterodimers and inhibiting their DNA binding and transcriptional activity. Implicated in regulating a variety of cellular processes, including cellular growth, senescence, differentiation, apoptosis, angiogenesis, and neoplastic transformation. Inhibits skeletal muscle and cardiac myocyte differentiation. Regulates the circadian clock by repressing the transcriptional activator activity of the CLOCK-BMAL1 heterodimer. This chain is DNA-binding protein inhibitor ID-1 (Id1), found in Rattus norvegicus (Rat).